The primary structure comprises 360 residues: DNA replication and repair protein RecF (360 aa).

30–37 (GQNGSGKT) provides a ligand contact to ATP.

Belongs to the RecF family.

The protein localises to the cytoplasm. In terms of biological role, the RecF protein is involved in DNA metabolism; it is required for DNA replication and normal SOS inducibility. RecF binds preferentially to single-stranded, linear DNA. It also seems to bind ATP. This chain is DNA replication and repair protein RecF, found in Shewanella frigidimarina (strain NCIMB 400).